The primary structure comprises 643 residues: 3D-(3,5/4)-trihydroxycyclohexane-1,2-dione hydrolase (643 aa).

Glutamate 65 serves as a coordination point for thiamine diphosphate. The segment at 441–521 (SLPGDLQRMW…VNVLLFDNCG (81 aa)) is thiamine pyrophosphate binding. Aspartate 492 and asparagine 519 together coordinate Mg(2+).

Belongs to the TPP enzyme family. The cofactor is Mg(2+). It depends on thiamine diphosphate as a cofactor.

It carries out the reaction 3D-3,5/4-trihydroxycyclohexane-1,2-dione + H2O = 5-deoxy-D-glucuronate + H(+). It participates in polyol metabolism; myo-inositol degradation into acetyl-CoA; acetyl-CoA from myo-inositol: step 3/7. Functionally, involved in the cleavage of the C1-C2 bond of 3D-(3,5/4)-trihydroxycyclohexane-1,2-dione (THcHDO) to yield 5-deoxy-glucuronate (5DG). The polypeptide is 3D-(3,5/4)-trihydroxycyclohexane-1,2-dione hydrolase (Clostridium botulinum (strain Alaska E43 / Type E3)).